The primary structure comprises 284 residues: MEMO1 family protein Saci_0089 (284 aa).

Belongs to the MEMO1 family.

This Sulfolobus acidocaldarius (strain ATCC 33909 / DSM 639 / JCM 8929 / NBRC 15157 / NCIMB 11770) protein is MEMO1 family protein Saci_0089.